The primary structure comprises 358 residues: ATPase ASNA1 homolog (358 aa).

Position 35–42 (35–42 (KGGVGKTT)) interacts with ATP. Asp-64 is a catalytic residue. ATP-binding residues include Glu-235 and Asn-262.

It belongs to the arsA ATPase family. Homodimer.

The protein resides in the cytoplasm. It localises to the endoplasmic reticulum. Functionally, ATPase required for the post-translational delivery of tail-anchored (TA) proteins to the endoplasmic reticulum. Recognizes and selectively binds the transmembrane domain of TA proteins in the cytosol. This complex then targets to the endoplasmic reticulum by membrane-bound receptors, where the tail-anchored protein is released for insertion. This process is regulated by ATP binding and hydrolysis. ATP binding drives the homodimer towards the closed dimer state, facilitating recognition of newly synthesized TA membrane proteins. ATP hydrolysis is required for insertion. Subsequently, the homodimer reverts towards the open dimer state, lowering its affinity for the membrane-bound receptor, and returning it to the cytosol to initiate a new round of targeting. The sequence is that of ATPase ASNA1 homolog from Babesia bovis.